The following is a 417-amino-acid chain: UDP-N-acetylglucosamine 1-carboxyvinyltransferase (417 aa).

A phosphoenolpyruvate-binding site is contributed by 22–23 (KN). Position 93 (Arg-93) interacts with UDP-N-acetyl-alpha-D-glucosamine. Catalysis depends on Cys-117, which acts as the Proton donor. Cys-117 is modified (2-(S-cysteinyl)pyruvic acid O-phosphothioketal). UDP-N-acetyl-alpha-D-glucosamine is bound by residues 122-126 (RPVDQ), Asp-305, and Ile-327.

Belongs to the EPSP synthase family. MurA subfamily.

Its subcellular location is the cytoplasm. It carries out the reaction phosphoenolpyruvate + UDP-N-acetyl-alpha-D-glucosamine = UDP-N-acetyl-3-O-(1-carboxyvinyl)-alpha-D-glucosamine + phosphate. The protein operates within cell wall biogenesis; peptidoglycan biosynthesis. Functionally, cell wall formation. Adds enolpyruvyl to UDP-N-acetylglucosamine. This Chromobacterium violaceum (strain ATCC 12472 / DSM 30191 / JCM 1249 / CCUG 213 / NBRC 12614 / NCIMB 9131 / NCTC 9757 / MK) protein is UDP-N-acetylglucosamine 1-carboxyvinyltransferase.